A 458-amino-acid polypeptide reads, in one-letter code: tRNA modification GTPase MnmE (458 aa).

(6S)-5-formyl-5,6,7,8-tetrahydrofolate-binding residues include Arg26, Glu88, and Arg127. The region spanning 224–378 is the TrmE-type G domain; the sequence is GLSTAIIGRP…IEDRINQLFF (155 aa). Asn234 provides a ligand contact to K(+). GTP-binding positions include 234 to 239, 253 to 259, and 278 to 281; these read NVGKSS, TDIAGTT, and DTAG. Ser238 serves as a coordination point for Mg(2+). Thr253, Ile255, and Thr258 together coordinate K(+). Residue Thr259 coordinates Mg(2+). (6S)-5-formyl-5,6,7,8-tetrahydrofolate is bound at residue Lys458.

It belongs to the TRAFAC class TrmE-Era-EngA-EngB-Septin-like GTPase superfamily. TrmE GTPase family. Homodimer. Heterotetramer of two MnmE and two MnmG subunits. The cofactor is K(+).

It is found in the cytoplasm. Exhibits a very high intrinsic GTPase hydrolysis rate. Involved in the addition of a carboxymethylaminomethyl (cmnm) group at the wobble position (U34) of certain tRNAs, forming tRNA-cmnm(5)s(2)U34. The protein is tRNA modification GTPase MnmE of Streptococcus pyogenes serotype M1.